The sequence spans 692 residues: Protein arginine N-methyltransferase 7 (692 aa).

SAM-dependent MTase PRMT-type domains follow at residues 14–359 (ENSW…YSLW) and 368–692 (AKTV…QEKR).

It belongs to the class I-like SAM-binding methyltransferase superfamily. Protein arginine N-methyltransferase family. PRMT7 subfamily.

Functionally, essential arginine methyltransferase that can both catalyze the formation of omega-N monomethylarginine (MMA) and symmetrical dimethylarginine (sDMA). Specifically mediates the symmetrical dimethylation of arginine residues in the small nuclear ribonucleoproteins SmD1 and SmD3. This is Protein arginine N-methyltransferase 7 (Art7) from Drosophila pseudoobscura pseudoobscura (Fruit fly).